The following is a 248-amino-acid chain: 3-deoxy-manno-octulosonate cytidylyltransferase (248 aa).

This sequence belongs to the KdsB family.

The protein resides in the cytoplasm. It catalyses the reaction 3-deoxy-alpha-D-manno-oct-2-ulosonate + CTP = CMP-3-deoxy-beta-D-manno-octulosonate + diphosphate. Its pathway is nucleotide-sugar biosynthesis; CMP-3-deoxy-D-manno-octulosonate biosynthesis; CMP-3-deoxy-D-manno-octulosonate from 3-deoxy-D-manno-octulosonate and CTP: step 1/1. It participates in bacterial outer membrane biogenesis; lipopolysaccharide biosynthesis. Functionally, activates KDO (a required 8-carbon sugar) for incorporation into bacterial lipopolysaccharide in Gram-negative bacteria. This chain is 3-deoxy-manno-octulosonate cytidylyltransferase, found in Escherichia coli (strain K12 / MC4100 / BW2952).